A 419-amino-acid polypeptide reads, in one-letter code: Putative competence-damage inducible protein (419 aa).

It belongs to the CinA family.

The sequence is that of Putative competence-damage inducible protein from Lysinibacillus sphaericus (strain C3-41).